The chain runs to 365 residues: Chorismate synthase (365 aa).

Arg47 is an NADP(+) binding site. Residues 124–126 (RAS), Gly287, 302–306 (KPTAT), and Arg328 each bind FMN.

Belongs to the chorismate synthase family. Homotetramer. FMNH2 is required as a cofactor.

It carries out the reaction 5-O-(1-carboxyvinyl)-3-phosphoshikimate = chorismate + phosphate. It functions in the pathway metabolic intermediate biosynthesis; chorismate biosynthesis; chorismate from D-erythrose 4-phosphate and phosphoenolpyruvate: step 7/7. In terms of biological role, catalyzes the anti-1,4-elimination of the C-3 phosphate and the C-6 proR hydrogen from 5-enolpyruvylshikimate-3-phosphate (EPSP) to yield chorismate, which is the branch point compound that serves as the starting substrate for the three terminal pathways of aromatic amino acid biosynthesis. This reaction introduces a second double bond into the aromatic ring system. The sequence is that of Chorismate synthase from Prochlorococcus marinus (strain MIT 9312).